The sequence spans 427 residues: Trigger factor (427 aa).

The PPIase FKBP-type domain maps to 163–248 (GDTVVIDFVG…IHEVKAKEVP (86 aa)).

It belongs to the FKBP-type PPIase family. Tig subfamily.

The protein resides in the cytoplasm. The enzyme catalyses [protein]-peptidylproline (omega=180) = [protein]-peptidylproline (omega=0). In terms of biological role, involved in protein export. Acts as a chaperone by maintaining the newly synthesized protein in an open conformation. Functions as a peptidyl-prolyl cis-trans isomerase. The chain is Trigger factor from Streptococcus pneumoniae (strain Hungary19A-6).